The sequence spans 202 residues: ATP-dependent Clp protease proteolytic subunit (202 aa).

Serine 101 functions as the Nucleophile in the catalytic mechanism. The active site involves histidine 126.

The protein belongs to the peptidase S14 family. In terms of assembly, component of the chloroplastic Clp protease core complex.

The protein resides in the plastid. It is found in the chloroplast stroma. It catalyses the reaction Hydrolysis of proteins to small peptides in the presence of ATP and magnesium. alpha-casein is the usual test substrate. In the absence of ATP, only oligopeptides shorter than five residues are hydrolyzed (such as succinyl-Leu-Tyr-|-NHMec, and Leu-Tyr-Leu-|-Tyr-Trp, in which cleavage of the -Tyr-|-Leu- and -Tyr-|-Trp bonds also occurs).. In terms of biological role, cleaves peptides in various proteins in a process that requires ATP hydrolysis. Has a chymotrypsin-like activity. Plays a major role in the degradation of misfolded proteins. The sequence is that of ATP-dependent Clp protease proteolytic subunit from Liriodendron tulipifera (Tuliptree).